We begin with the raw amino-acid sequence, 323 residues long: Transaldolase (323 aa).

The active-site Schiff-base intermediate with substrate is the K131.

This sequence belongs to the transaldolase family. Type 1 subfamily. In terms of assembly, homodimer.

The protein resides in the cytoplasm. It carries out the reaction D-sedoheptulose 7-phosphate + D-glyceraldehyde 3-phosphate = D-erythrose 4-phosphate + beta-D-fructose 6-phosphate. It participates in carbohydrate degradation; pentose phosphate pathway; D-glyceraldehyde 3-phosphate and beta-D-fructose 6-phosphate from D-ribose 5-phosphate and D-xylulose 5-phosphate (non-oxidative stage): step 2/3. Transaldolase is important for the balance of metabolites in the pentose-phosphate pathway. The polypeptide is Transaldolase (Blochmanniella floridana).